Here is a 383-residue protein sequence, read N- to C-terminus: Izumo sperm-egg fusion protein 1 (383 aa).

The signal sequence occupies residues 1-21 (MGLHFTLLLAALANCLCPARL). 5 disulfides stabilise this stretch: Cys-22/Cys-149, Cys-25/Cys-152, Cys-135/Cys-159, Cys-139/Cys-165, and Cys-182/Cys-233. Over 22-306 (CIICDPFVVA…HRPEKKLKSR (285 aa)) the chain is Extracellular. Residues 148-160 (WCNKCEKQMHFCR) form an important for interaction with IZUMO1R region. The region spanning 167–251 (ERQIEVHRLE…PATIIYYHVT (85 aa)) is the Ig-like C2-type domain. The N-linked (GlcNAc...) asparagine glycan is linked to Asn-204. The chain crosses the membrane as a helical span at residues 307–327 (LLILLILGFVVLVASVIASVL). The Cytoplasmic segment spans residues 328-383 (HFRKTRVKSKNSNVENKTSAAEFKSEAESPQKMGSRKLSQAEFHTDSSDKVEEADN). Positions 335–383 (KSKNSNVENKTSAAEFKSEAESPQKMGSRKLSQAEFHTDSSDKVEEADN) are disordered. Over residues 337-346 (KNSNVENKTS) the composition is skewed to polar residues. 3 positions are modified to phosphoserine: Ser-339, Ser-346, and Ser-366. Residues 370–383 (FHTDSSDKVEEADN) show a composition bias toward basic and acidic residues. At Thr-372 the chain carries Phosphothreonine.

This sequence belongs to the Izumo family. As to quaternary structure, monomer, homodimer; disulfide-linked and homooligomer; depending on the context. Interacts with IZUMO1R/JUNO. IZUMO1 and IZUMO1R/JUNO form a complex with 1:1 stoichiometry. In gamete recognition, IZUMO1R/JUNO first binds to monomeric IZUMO1. The weak, but specific interaction with IZUMO1R/JUNO induces IZUMO1 homodimerization. The process follows a tight binding phase where IZUMO1 bends the entire structure towards the sperm membrane side through a thiol-disulfide exchange reaction. The molecule no longer binds to IZUMO1R/JUNO and instead binds to a putative second oocyte receptor. Interacts with ACE3. Part of a oolemmal binding multimeric complex (IZUMO1 complex) composed at least of IZUMO1 and GLIPR1L1; the complex assemblage is influenced by the maturation status of the male germ cell. Interacts with GLIPR1L1. Interacts with FREY; the interaction retains IZUMO1 at the endoplasmic reticulum membrane and coordinates IZUMO1 complex assembly. Interacts with WDR54. Forms a complex with SPACA6 and TMEM81 on spermatocyte cell membrane. Post-translationally, N-glycosylated. Glycosylation is not essential for fusion and for proper protein trafficking in sperm. Phosphorylated. The cytoplasmic C-terminus is phosphorylated and undergoes phosphorylation changes during epididymal transit. Expressed in sperm (at protein level).

The protein localises to the cell membrane. Its subcellular location is the cytoplasmic vesicle. It is found in the secretory vesicle. It localises to the acrosome membrane. Essential sperm cell-surface protein required for fertilization by acting as a ligand for IZUMO1R/JUNO receptor on egg. The IZUMO1:IZUMO1R/JUNO interaction is a necessary adhesion event between sperm and egg that is required for fertilization but is not sufficient for cell fusion. The ligand-receptor interaction probably does not act as a membrane 'fusogen'. Plays a critical role in sperm-oolemma binding prior to plasma membrane fusion. Can mediate cell-cell fusion in cultured mammalian cells independently of its binding to IZUMO1R/JUNO. This Rattus norvegicus (Rat) protein is Izumo sperm-egg fusion protein 1.